The chain runs to 884 residues: Chondroitin sulfate synthase 3 (884 aa).

The Cytoplasmic portion of the chain corresponds to 1–7; sequence MAVRSRR. The chain crosses the membrane as a helical; Signal-anchor for type II membrane protein span at residues 8–28; the sequence is PWVSVALGLVLGFTAASWLIA. Over 29 to 884 the chain is Lumenal; the sequence is PRVAELSEKR…LGVRDNRTLS (856 aa). The disordered stretch occupies residues 47 to 164; that stretch reads YYGRSATGPR…NGSGDGGAAV (118 aa). 2 stretches are compositionally biased toward low complexity: residues 60–69 and 84–96; these read QQLLPQPQSR and PGPQQPEAAPGGP. Asn155 and Asn281 each carry an N-linked (GlcNAc...) asparagine glycan. The tract at residues 437-456 is disordered; it reads SNSEVSKEDQQLGRTPSFNH. Asn712 carries an N-linked (GlcNAc...) asparagine glycan. A divalent metal cation contacts are provided by Asp722 and His836. The N-linked (GlcNAc...) asparagine glycan is linked to Asn880.

The protein belongs to the chondroitin N-acetylgalactosaminyltransferase family. The cofactor is Co(2+). Requires Mn(2+) as cofactor. Cd(2+) serves as cofactor.

It localises to the golgi apparatus. It is found in the golgi stack membrane. It catalyses the reaction 3-O-(beta-D-GlcA-(1-&gt;3)-beta-D-GalNAc-(1-&gt;4)-beta-D-GlcA-(1-&gt;3)-beta-D-Gal-(1-&gt;3)-beta-D-Gal-(1-&gt;4)-beta-D-Xyl)-L-seryl-[protein] + UDP-N-acetyl-alpha-D-galactosamine = 3-O-(beta-D-GalNAc-(1-&gt;4)-beta-D-GlcA-(1-&gt;3)-beta-D-GalNAc-(1-&gt;4)-beta-D-GlcA-(1-&gt;3)-beta-D-Gal-(1-&gt;3)-beta-D-Gal-(1-&gt;4)-beta-D-Xyl)-L-seryl-[protein] + UDP + H(+). It carries out the reaction 3-O-{beta-D-GlcA-(1-&gt;3)-[beta-D-GalNAc-(1-&gt;4)-beta-D-GlcA-(1-&gt;3)](n)-beta-D-GalNAc-(1-&gt;4)-beta-D-GlcA-(1-&gt;3)-beta-D-Gal-(1-&gt;3)-beta-D-Gal-(1-&gt;4)-beta-D-Xyl}-L-seryl-[protein] + UDP-N-acetyl-alpha-D-galactosamine = 3-O-{[beta-D-GalNAc-(1-&gt;4)-beta-D-GlcA-(1-&gt;3)](n+1)-beta-D-GalNAc-(1-&gt;4)-beta-D-GlcA-(1-&gt;3)-beta-D-Gal-(1-&gt;3)-beta-D-Gal-(1-&gt;4)-beta-D-Xyl}-L-seryl-[protein] + UDP + H(+). The enzyme catalyses 3-O-(beta-D-GalNAc-(1-&gt;4)-beta-D-GlcA-(1-&gt;3)-beta-D-Gal-(1-&gt;3)-beta-D-Gal-(1-&gt;4)-beta-D-Xyl)-L-seryl-[protein] + UDP-alpha-D-glucuronate = 3-O-(beta-D-GlcA-(1-&gt;3)-beta-D-GalNAc-(1-&gt;4)-beta-D-GlcA-(1-&gt;3)-beta-D-Gal-(1-&gt;3)-beta-D-Gal-(1-&gt;4)-beta-D-Xyl)-L-seryl-[protein] + UDP + H(+). The catalysed reaction is 3-O-{[beta-D-GalNAc-(1-&gt;4)-beta-D-GlcA-(1-&gt;3)](n)-beta-D-GalNAc-(1-&gt;4)-beta-D-GlcA-(1-&gt;3)-beta-D-Gal-(1-&gt;3)-beta-D-Gal-(1-&gt;4)-beta-D-Xyl}-L-seryl-[protein] + UDP-alpha-D-glucuronate = 3-O-{beta-D-GlcA-(1-&gt;3)-[beta-D-GalNAc-(1-&gt;4)-beta-D-GlcA-(1-&gt;3)](n)-beta-D-GalNAc-(1-&gt;4)-beta-D-GlcA-(1-&gt;3)-beta-D-Gal-(1-&gt;3)-beta-D-Gal-(1-&gt;4)-beta-D-Xyl}-L-seryl-[protein] + UDP + H(+). Functionally, has both beta-1,3-glucuronic acid and beta-1,4-N-acetylgalactosamine transferase activity. Transfers glucuronic acid (GlcUA) from UDP-GlcUA and N-acetylgalactosamine (GalNAc) from UDP-GalNAc to the non-reducing end of the elongating chondroitin polymer. Specific activity is much reduced compared to CHSY1. The protein is Chondroitin sulfate synthase 3 (Chsy3) of Mus musculus (Mouse).